We begin with the raw amino-acid sequence, 1049 residues long: MSLQFIGLQRRDVVALVNFLRHLTQKPDVDLEAHPKILKKCGEKRLHRRTVLFNELMLWLGYYRELRFHNPDLSSVLEEFEVRCAAVARRGYTYPFGDRGKARDHLAVLDRTEFDTDVRHDAEIVERALVSAVILAKMSVRETLVTAIGQTEPIAFVHLKDTEVQRIEENLEGVRRNMFCAKPLDLNLDRHANTALVNAVNKLVYTGRLIMNVRRSWEELERKCLARIQERCKLLVKELRMCLSFDSNYCRNILKHAVENGDSADTLLELLIEDFDIYVDSFPQSAHTFLGARSPSLEFDDDANLLSLGGGSAFSSVPKKHVPTQPLDGWSWIASPWKGHKPFRFEAHGSLAPAAEAHAARSAAVGYYDEEEKRRERQKRVDDEVVQREKQQLKAWEERQQNLQQRQQQPPPPTRKPGASRRLFGSSADEDDDDDDDDEKNIFTPIKKPGTSGKGAASGGGVSSIFSGLLSSGSQKPTSGPLNIPQQQQRHAAFSLVSPQVTKASPGRVRRDSAWDVRPLTETRGDLFSGDEDSDSSDGYPPNRQDPRFTDTLVDITDTETSAKPPVTTAYKFEQPTLTFGAGVNVPAGAGAAILTPTPVNPSTAPAPAPTPTFAGTQTPVNGNSPWAPTAPLPGDMNPANWPRERAWALKNPHLAYNPFRMPTTSTASQNTVSTTPRRPSTPRAAVTQTASRDAADEVWALRDQTAESPVEDSEEEDDDSSDTGSVVSLGHTTPSSDYNNDVISPPSQTPEQSTPSRIRKAKLSSPMTTTSTSQKPVLGKRVATPHASARAQTVTSTPVQGRLEKQVSGTPSTVPATLLQPQPASSKTTSSRNVTSGAGTSSASSARQPSASASVLSPTEDDVVSPATSPLSMLSSASPSPAKSAPPSPVKGRGSRVGVPSLKPTLGGKAVVGRPPSVPVSGSAPGRLSGSSRAASTTPTYPAVTTVYPPSSTAKSSVSNAPPVASPSILKPGASAALQSRRSTGIAAVGSPVKSTTGMKTVAFDLSSPQKSGTGPQPGSAGMGGAKTPSDAVQNILQKIEKIKNTEE.

Disordered stretches follow at residues 397 to 549 (EERQ…DPRF) and 659 to 945 (PFRM…YPAV). The segment covering 428–439 (ADEDDDDDDDDE) has biased composition (acidic residues). Residues 452 to 462 (SGKGAASGGGV) show a composition bias toward gly residues. Low complexity predominate over residues 463–474 (SSIFSGLLSSGS). Over residues 475 to 490 (QKPTSGPLNIPQQQQR) the composition is skewed to polar residues. The span at 509–525 (VRRDSAWDVRPLTETRG) shows a compositional bias: basic and acidic residues. Residues 672 to 688 (TVSTTPRRPSTPRAAVT) show a composition bias toward low complexity. Over residues 710 to 722 (PVEDSEEEDDDSS) the composition is skewed to acidic residues. Residues 731 to 743 (GHTTPSSDYNNDV) are compositionally biased toward polar residues. The span at 745–757 (SPPSQTPEQSTPS) shows a compositional bias: low complexity. Composition is skewed to polar residues over residues 766 to 776 (SPMTTTSTSQK), 791 to 800 (RAQTVTSTPV), and 808 to 835 (VSGT…SRNV). Low complexity-rich tracts occupy residues 836 to 855 (TSGA…ASAS), 866 to 884 (SPAT…SPAK), 912 to 928 (VVGR…APGR), and 936 to 945 (ASTTPTYPAV). S922 carries an O-linked (GlcNAc) serine; by host glycan. O-linked (GlcNAc) serine; by host glycosylation occurs at S953. A disordered region spans residues 1006–1032 (DLSSPQKSGTGPQPGSAGMGGAKTPSD). Polar residues predominate over residues 1008–1018 (SSPQKSGTGPQ).

The protein belongs to the herpesviridae large structural phosphoprotein family. As to quaternary structure, interacts with host BICD1 and RAB6A. Interacts with small capsid protein UL48A; this interaction links together the capsid and pp150. Interacts with host CCNA2. Post-translationally, phosphorylated by host CCNA2.

Its subcellular location is the virion tegument. The protein resides in the host cytoplasm. It is found in the host nucleus. Participates in the last steps of viral maturation and release. Associates with nuclear capsids prior to DNA encapsidation and later preserves the integrity of nucleocapsids through secondary envelopment at the assembly compartment. Interacts with host CCNA2 and thereby blocks the onset of lytic gene expression to promote establishment of a quiescent state of infection in undifferentiated cells. The sequence is that of Tegument protein pp150 (UL32) from Homo sapiens (Human).